The primary structure comprises 714 residues: MYTKERERELIQRTKELLKIKKEHIKTKEDAEAIIEDLRDVIRYHDWRYYVLANPVISDYEYDQLFHLLKDIESRFPELITPDSPTQRVPSELTKEFPQVKHLAPMLSLDNSYNEEDLREFDRRVREAVGIDIIEYAVEPKFDGAGISLVYEKDMFVRGATRGDGVVGEDITPNIRVIKTVPLSAEFSVYGIDRIEIRGEVLINKEKFKEINHQRLEEGLPPLANPRNAAAGSLRLQDPKEVAKRGLEAFVYQITYAVDKDGNNLLGNKLRYHYDSIKILYELGFKSPYKEIKVCRGIDEVIDYCREWERKRDDYPYEIDGMVIKVNDISLYDRLGVTSHHPRWAIAFKFRARQATTKIIKVVFQVGRTGAVTPVAKLEPVEIGGVTVSSVSLINEDFIKEKDIRVGDLVLIERAGDVIPYVVKVVTEARTGKEKPIQFPKECPSCGSPLVKPAGEAVWRCININCPAQVVERIIYFASKDAMDIRGLGEANIRKFYQLGFLRSIPDIYRLPYDKIIQLEGFGQKSVENLKKAIEESKNRPINRLITGLGIRFVGKVTARTLAENINCVEDLKDWSVEDLERLPDVGYVVAHSIYDFFHNPDNIKMIQELKRLGVQTCKEKEEVVENIFEGKTFVFTGTLSCCSREIAQEIVERLGGHASSSVSRKTSYVVVGENPGSKYRKALSLGVQILDEKQFIEMIKDHIPDDLKDKVHL.

NAD(+)-binding positions include 59-63, 108-109, and E139; these read DYEYD and SL. K141 serves as the catalytic N6-AMP-lysine intermediate. Residues R162, E200, K325, and K349 each contribute to the NAD(+) site. Residues C443, C446, C461, and C466 each coordinate Zn(2+). The region spanning 624 to 713 is the BRCT domain; sequence VVENIFEGKT…IPDDLKDKVH (90 aa).

It belongs to the NAD-dependent DNA ligase family. LigA subfamily. It depends on Mg(2+) as a cofactor. The cofactor is Mn(2+).

The catalysed reaction is NAD(+) + (deoxyribonucleotide)n-3'-hydroxyl + 5'-phospho-(deoxyribonucleotide)m = (deoxyribonucleotide)n+m + AMP + beta-nicotinamide D-nucleotide.. Its function is as follows. DNA ligase that catalyzes the formation of phosphodiester linkages between 5'-phosphoryl and 3'-hydroxyl groups in double-stranded DNA using NAD as a coenzyme and as the energy source for the reaction. It is essential for DNA replication and repair of damaged DNA. This Persephonella marina (strain DSM 14350 / EX-H1) protein is DNA ligase.